Here is a 264-residue protein sequence, read N- to C-terminus: Thymidylate synthase (264 aa).

DUMP is bound at residue Arg21. His51 contacts (6R)-5,10-methylene-5,6,7,8-tetrahydrofolate. A dUMP-binding site is contributed by 126 to 127 (RR). Residue Cys146 is the Nucleophile of the active site. Residues 166–169 (RSAD), Asn177, and 207–209 (HLY) contribute to the dUMP site. Asp169 is a (6R)-5,10-methylene-5,6,7,8-tetrahydrofolate binding site. Residue Ala263 coordinates (6R)-5,10-methylene-5,6,7,8-tetrahydrofolate.

This sequence belongs to the thymidylate synthase family. Bacterial-type ThyA subfamily. In terms of assembly, homodimer.

The protein resides in the cytoplasm. It catalyses the reaction dUMP + (6R)-5,10-methylene-5,6,7,8-tetrahydrofolate = 7,8-dihydrofolate + dTMP. It functions in the pathway pyrimidine metabolism; dTTP biosynthesis. In terms of biological role, catalyzes the reductive methylation of 2'-deoxyuridine-5'-monophosphate (dUMP) to 2'-deoxythymidine-5'-monophosphate (dTMP) while utilizing 5,10-methylenetetrahydrofolate (mTHF) as the methyl donor and reductant in the reaction, yielding dihydrofolate (DHF) as a by-product. This enzymatic reaction provides an intracellular de novo source of dTMP, an essential precursor for DNA biosynthesis. This is Thymidylate synthase from Rhodopirellula baltica (strain DSM 10527 / NCIMB 13988 / SH1).